The sequence spans 863 residues: Leucine--tRNA ligase (863 aa).

Residues 42-52 (PYPSGRLHMGH) carry the 'HIGH' region motif. The 'KMSKS' region signature appears at 622 to 626 (KMSKS). Lysine 625 provides a ligand contact to ATP.

The protein belongs to the class-I aminoacyl-tRNA synthetase family.

The protein resides in the cytoplasm. It carries out the reaction tRNA(Leu) + L-leucine + ATP = L-leucyl-tRNA(Leu) + AMP + diphosphate. This is Leucine--tRNA ligase from Shewanella loihica (strain ATCC BAA-1088 / PV-4).